The following is an 85-amino-acid chain: Translation initiation factor IF-1 1 (85 aa).

Positions 1–72 (MAKEELIEMS…SKGRITFRHL (72 aa)) constitute an S1-like domain.

The protein belongs to the IF-1 family. As to quaternary structure, component of the 30S ribosomal translation pre-initiation complex which assembles on the 30S ribosome in the order IF-2 and IF-3, IF-1 and N-formylmethionyl-tRNA(fMet); mRNA recruitment can occur at any time during PIC assembly.

Its subcellular location is the cytoplasm. Functionally, one of the essential components for the initiation of protein synthesis. Stabilizes the binding of IF-2 and IF-3 on the 30S subunit to which N-formylmethionyl-tRNA(fMet) subsequently binds. Helps modulate mRNA selection, yielding the 30S pre-initiation complex (PIC). Upon addition of the 50S ribosomal subunit IF-1, IF-2 and IF-3 are released leaving the mature 70S translation initiation complex. The polypeptide is Translation initiation factor IF-1 1 (Aromatoleum aromaticum (strain DSM 19018 / LMG 30748 / EbN1) (Azoarcus sp. (strain EbN1))).